The primary structure comprises 892 residues: Alpha-actinin-1 (892 aa).

N-acetylmethionine is present on Met-1. An actin-binding region spans residues Met-1–His-247. Ser-6 bears the Phosphoserine mark. A Phosphotyrosine; by FAK1 modification is found at Tyr-12. 2 Calponin-homology (CH) domains span residues Lys-31 to Ala-135 and Thr-144 to Ser-250. N6-acetyllysine occurs at positions 95 and 195. Spectrin repeat units follow at residues Gln-274 to Asn-384, His-394 to Arg-499, Gln-509 to Glu-620, and Arg-630 to Asn-733. Residues Gln-274–Asn-733 are interaction with DDN. Residue Ser-471 is modified to Phosphoserine. An N6-acetyllysine modification is found at Lys-676. Ser-677 is subject to Phosphoserine. EF-hand domains are found at residues Glu-746–Asp-781 and Gln-787–Asp-822. Ca(2+) is bound by residues Asp-759, Asp-761, Ser-763, Thr-765, and Glu-770. The residue at position 890 (Ser-890) is a Phosphoserine.

It belongs to the alpha-actinin family. As to quaternary structure, homodimer; antiparallel. Interacts with MYOZ2, TTID and LPP. Interacts with DDN. Interacts with PSD. Interacts with MICALL2. Interacts with DNM2 and CTTN. Interacts with PDLIM1. Interacts with PDLIM2. Interacts with PDLIM4 (via PDZ domain). Interacts with IGSF8.

Its subcellular location is the cytoplasm. It localises to the cytoskeleton. The protein localises to the myofibril. The protein resides in the sarcomere. It is found in the z line. Its subcellular location is the cell membrane. It localises to the cell junction. The protein localises to the cell projection. The protein resides in the ruffle. Its function is as follows. F-actin cross-linking protein which is thought to anchor actin to a variety of intracellular structures. Association with IGSF8 regulates the immune synapse formation and is required for efficient T-cell activation. This is Alpha-actinin-1 (ACTN1) from Bos taurus (Bovine).